Reading from the N-terminus, the 102-residue chain is Small ribosomal subunit protein eS24 (102 aa).

Belongs to the eukaryotic ribosomal protein eS24 family.

This is Small ribosomal subunit protein eS24 from Methanococcus aeolicus (strain ATCC BAA-1280 / DSM 17508 / OCM 812 / Nankai-3).